We begin with the raw amino-acid sequence, 247 residues long: Cell division protein ZapD (247 aa).

Belongs to the ZapD family. Interacts with FtsZ.

It is found in the cytoplasm. In terms of biological role, cell division factor that enhances FtsZ-ring assembly. Directly interacts with FtsZ and promotes bundling of FtsZ protofilaments, with a reduction in FtsZ GTPase activity. This Salmonella agona (strain SL483) protein is Cell division protein ZapD.